Here is a 245-residue protein sequence, read N- to C-terminus: tRNA pseudouridine synthase A (245 aa).

Aspartate 52 functions as the Nucleophile in the catalytic mechanism. Tyrosine 111 is a binding site for substrate.

Belongs to the tRNA pseudouridine synthase TruA family. Homodimer.

It carries out the reaction uridine(38/39/40) in tRNA = pseudouridine(38/39/40) in tRNA. In terms of biological role, formation of pseudouridine at positions 38, 39 and 40 in the anticodon stem and loop of transfer RNAs. The chain is tRNA pseudouridine synthase A from Rickettsia prowazekii (strain Madrid E).